We begin with the raw amino-acid sequence, 318 residues long: Acetylglutamate kinase (318 aa).

Substrate contacts are provided by residues 80–81 (GG), Arg-102, and Asn-203.

It belongs to the acetylglutamate kinase family. ArgB subfamily.

The protein resides in the cytoplasm. The enzyme catalyses N-acetyl-L-glutamate + ATP = N-acetyl-L-glutamyl 5-phosphate + ADP. It functions in the pathway amino-acid biosynthesis; L-arginine biosynthesis; N(2)-acetyl-L-ornithine from L-glutamate: step 2/4. Catalyzes the ATP-dependent phosphorylation of N-acetyl-L-glutamate. The protein is Acetylglutamate kinase of Bifidobacterium adolescentis (strain ATCC 15703 / DSM 20083 / NCTC 11814 / E194a).